The following is a 37-amino-acid chain: Mating pheromone Er-20 (37 aa).

Cystine bridges form between Cys-3/Cys-18, Cys-10/Cys-32, and Cys-15/Cys-24.

Homodimer.

It is found in the secreted. Mating ciliate pheromones (or gamones) are diffusible extracellular communication signals that distinguish different intraspecific classes of cells commonly referred to as 'mating types'. They prepare the latter for conjugation by changing their cell surface properties. This Euplotes raikovi protein is Mating pheromone Er-20 (MAT20).